Here is a 346-residue protein sequence, read N- to C-terminus: Cyclic GMP-AMP synthase-like protein (346 aa).

ATP contacts are provided by residues Ser-58 and 70 to 72; that span reads EFD. Mg(2+) is bound by residues Glu-70, Asp-72, and Asp-165. Residues Asp-165 and 212-219 each bind GTP; that span reads MVCAPHWE. ATP-binding positions include 216-219, Lys-237, and 252-256; these read PHWE and SYMLK.

It belongs to the mab-21 family. Mg(2+) serves as cofactor. The cofactor is Mn(2+).

Its activity is regulated as follows. Activated in response of some unknown stimulus. Not activated in response to L-monocytogenes infection. Functionally, probable nucleotidyltransferase that catalyzes the formation of cyclic dinucleotide second messenger in response to some unknown stimulus. Does not catalyze the formation of cyclic GMP-AMP from ATP and GTP. The polypeptide is Cyclic GMP-AMP synthase-like protein (Drosophila melanogaster (Fruit fly)).